A 90-amino-acid polypeptide reads, in one-letter code: Acylphosphatase (90 aa).

The 88-residue stretch at 3–90 (KKQFIVYGLV…REFTDFSVRY (88 aa)) folds into the Acylphosphatase-like domain. Active-site residues include Arg18 and Asn36.

This sequence belongs to the acylphosphatase family.

It carries out the reaction an acyl phosphate + H2O = a carboxylate + phosphate + H(+). The sequence is that of Acylphosphatase (acyP) from Pasteurella multocida (strain Pm70).